A 1256-amino-acid chain; its full sequence is Nephrin (1256 aa).

The N-terminal stretch at 1–35 is a signal peptide; sequence MGAKEATVRGPGASPVHRTCHLIPLLLAGMLTTGL. At 36-1078 the chain is on the extracellular side; that stretch reads AQSPVPTSAP…PGPPRLPLLP (1043 aa). 6 Ig-like C2-type domains span residues 39–144, 149–247, 256–347, 354–448, 454–554, and 558–649; these read PVPT…VILS, PKVL…ASFT, PPVI…RSIT, PSAV…KSLT, PAQK…TQLV, and PPTN…ETVS. Asn-54 carries N-linked (GlcNAc...) asparagine glycosylation. Disulfide bonds link Cys-67-Cys-125, Cys-174-Cys-231, and Cys-279-Cys-331. Residues Asn-370 and Asn-415 are each glycosylated (N-linked (GlcNAc...) asparagine). A disulfide bond links Cys-375 and Cys-431. At Ser-446 the chain carries Phosphoserine. Residues Cys-479 and Cys-542 are joined by a disulfide bond. A disordered region spans residues 491–516; sequence TWLKDSRPVNDPRQSQEPRRVQLGSV. Positions 494–510 are enriched in basic and acidic residues; that stretch reads KDSRPVNDPRQSQEPRR. 4 N-linked (GlcNAc...) asparagine glycosylation sites follow: Asn-561, Asn-578, Asn-591, and Asn-722. A disulfide bridge links Cys-581 with Cys-637. Ig-like C2-type domains are found at residues 754–846 and 852–953; these read PTIR…LVRL and PQVD…VSIS. 2 cysteine pairs are disulfide-bonded: Cys-775/Cys-830 and Cys-877/Cys-934. In terms of domain architecture, Fibronectin type-III spans 957 to 1051; it reads PPLGLKVVSV…GIQVSITTPG (95 aa). Residues 1048 to 1071 form a disordered region; that stretch reads TTPGLDQAPEDTDQPLPTEQPPGP. Residues 1079 to 1099 traverse the membrane as a helical segment; sequence VLFAVGGLLLLSNASCVGGLL. Over 1100–1256 the chain is Cytoplasmic; that stretch reads WRRRLRRLAE…LPFELRGHLV (157 aa). Ser-1112 carries the phosphoserine modification. The span at 1112 to 1128 shows a compositional bias: basic and acidic residues; it reads SEKTEAGSEEDRIRNEY. The segment at 1112-1143 is disordered; it reads SEKTEAGSEEDRIRNEYEESQWTGDRDTRSST. Thr-1115 is subject to Phosphothreonine. Ser-1119 carries the phosphoserine modification. Tyr-1208 is modified (phosphotyrosine; by FYN).

This sequence belongs to the immunoglobulin superfamily. As to quaternary structure, interacts with NPHS2 and with CD2AP (via C-terminal domain). Interacts with MAGI1 (via PDZ 2 and 3 domains) forming a tripartite complex with IGSF5/JAM4. Forms a complex with ACTN4, CASK, IQGAP1, MAGI2, SPTAN1 and SPTBN1. Interacts with DDN; the interaction is direct. Self-associates (via the Ig-like domains). Also interacts (via the Ig-like domains) with KIRREL1 and KIRREL2; the interaction with KIRREL1 is dependent on KIRREL1 glycosylation. Interacts with KIRREL3. Interacts with phosphatidylinositol 3-kinase regulatory subunit PIK3R1; the interaction is reduced by high glucose levels. In terms of processing, phosphorylated at Tyr-1208 by FYN, leading to the recruitment and activation of phospholipase C-gamma-1/PLCG1. Tyrosine phosphorylation is reduced by high glucose levels. Dephosphorylated by tensin TNS2 which leads to reduced binding of NPHN1 to PIK3R1. Expressed in kidney glomeruli. In the embryo, expressed in the mesonephric kidney at 11 dpc with strong expression in cranial tubules with podocyte-like structures. Expression is observed in the podocytes of the developing kidney from 13 dpc. High expression is also detected in the developing cerebellum, hindbrain, spinal cord, retina and hypothalamus. Expressed in skeletal muscle during myoblast fusion such as in the adult following acute injury and in the embryo but not detected in uninjured adult skeletal muscle. Isoform 1 and isoform 2 are expressed in the newborn brain and developing cerebellum. Isoform 1 is the predominant isoform in adult kidney.

Its subcellular location is the cell membrane. Seems to play a role in the development or function of the kidney glomerular filtration barrier. Regulates glomerular vascular permeability. May anchor the podocyte slit diaphragm to the actin cytoskeleton. Plays a role in skeletal muscle formation through regulation of myoblast fusion. In Mus musculus (Mouse), this protein is Nephrin (Nphs1).